The following is a 78-amino-acid chain: Exodeoxyribonuclease 7 small subunit (78 aa).

This sequence belongs to the XseB family. As to quaternary structure, heterooligomer composed of large and small subunits.

The protein resides in the cytoplasm. The catalysed reaction is Exonucleolytic cleavage in either 5'- to 3'- or 3'- to 5'-direction to yield nucleoside 5'-phosphates.. In terms of biological role, bidirectionally degrades single-stranded DNA into large acid-insoluble oligonucleotides, which are then degraded further into small acid-soluble oligonucleotides. This chain is Exodeoxyribonuclease 7 small subunit, found in Desulfitobacterium hafniense (strain Y51).